The following is a 555-amino-acid chain: Neutral amino acid transporter B(0) (555 aa).

Met1 bears the N-acetylmethionine mark. Residues 1-52 are Cytoplasmic-facing; it reads MAVDPPKADPKGVVAVDPTANCGSGLKSREDQGAKAGGCCSSRDQVCRCLRA. Residues 53–82 traverse the membrane as a helical segment; sequence NLLVLLTVAAAVAGVVLGLGVSAAGGAEAL. Topologically, residues 83-95 are extracellular; it reads GHARFTAFAFPGE. Residues 96-117 traverse the membrane as a helical segment; sequence LLLRLLEMIILPLVVCSLIGGA. Residues 118 to 131 are Cytoplasmic-facing; it reads ASLDPSALGRLGAW. Residues 132–154 form a helical membrane-spanning segment; that stretch reads ALLFFLVTTLLSSALGVALALAL. At 155-239 the chain is on the extracellular side; that stretch reads KPGAAFAAIN…SNATMDQPHC (85 aa). Residues Asn164 and Asn231 are each glycosylated (N-linked (GlcNAc...) asparagine). Residues 240–262 traverse the membrane as a helical segment; that stretch reads EMKMNILGLVVFAIVFGVALRKL. Over 263–271 the chain is Cytoplasmic; that stretch reads GPEGELLIR. The helical transmembrane segment at 272–299 threads the bilayer; that stretch reads FFNSFNDATMVLVSWIMWYAPIGILFLV. The Extracellular segment spans residues 300-320; that stretch reads AGKIVEMKDIRQLFIGLGKYI. A helical transmembrane segment spans residues 321–342; it reads VCCLLGHAIHGLLVLPLIYFLF. At 343–347 the chain is on the cytoplasmic side; sequence TRKNP. Residues 348–378 constitute an intramembrane region (discontinuously helical); that stretch reads YRFLWGIVTPLATAFGTSSSSATLPLMMKCV. Over 379 to 387 the chain is Cytoplasmic; that stretch reads EEKNGVAKH. Residues 388–414 form a helical membrane-spanning segment; sequence ISRFILPIGATVNMDGAALFQCVAAVF. Na(+) is bound by residues Gly396, Thr398, and Asn400. Residues 415 to 427 lie on the Extracellular side of the membrane; sequence IAQLNGMSLDFVK. Residues 428 to 461 constitute an intramembrane region (discontinuously helical); that stretch reads IITILVTATASSVGAAGIPAGGVLTLAIILEAIS. Over 462–474 the chain is Extracellular; sequence LPVKDISLILAVD. A helical transmembrane segment spans residues 475 to 496; it reads WLVDRSCTVLNVEGDAFGAGLL. Na(+) is bound by residues Asn485 and Asp489. Residues 497-555 are Cytoplasmic-facing; it reads QSYVDRTKMPSSEPELIQVKNDVSLKPLPLATEEGNPLLKQCREPSGDSSATCEKESVM. Residues Ser507, Ser508, Ser520, Ser545, and Ser553 each carry the phosphoserine modification. Residues 534–555 are disordered; sequence LLKQCREPSGDSSATCEKESVM.

The protein belongs to the dicarboxylate/amino acid:cation symporter (DAACS) (TC 2.A.23) family. In terms of assembly, homotrimer.

The protein localises to the cell membrane. It is found in the melanosome. It catalyses the reaction L-glutamine(out) + L-serine(in) + Na(+)(out) = L-glutamine(in) + L-serine(out) + Na(+)(in). The catalysed reaction is L-glutamine(in) + L-serine(out) + Na(+)(out) = L-glutamine(out) + L-serine(in) + Na(+)(in). It carries out the reaction L-threonine(in) + L-glutamine(out) + Na(+)(out) = L-threonine(out) + L-glutamine(in) + Na(+)(in). The enzyme catalyses L-threonine(out) + L-glutamine(in) + Na(+)(out) = L-threonine(in) + L-glutamine(out) + Na(+)(in). It catalyses the reaction L-asparagine(in) + L-glutamine(out) + Na(+)(out) = L-asparagine(out) + L-glutamine(in) + Na(+)(in). The catalysed reaction is L-asparagine(out) + L-glutamine(in) + Na(+)(out) = L-asparagine(in) + L-glutamine(out) + Na(+)(in). It carries out the reaction L-glutamine(in) + L-alanine(out) + Na(+)(out) = L-glutamine(out) + L-alanine(in) + Na(+)(in). The enzyme catalyses L-valine(out) + L-glutamine(in) + Na(+)(out) = L-valine(in) + L-glutamine(out) + Na(+)(in). It catalyses the reaction L-glutamine(in) + L-methionine(out) + Na(+)(out) = L-glutamine(out) + L-methionine(in) + Na(+)(in). The catalysed reaction is L-glutamine(in) + L-glutamate(out) + Na(+)(out) + H(+)(out) = L-glutamine(out) + L-glutamate(in) + Na(+)(in) + H(+)(in). It carries out the reaction D-serine(in) + L-glutamine(out) + Na(+)(out) = D-serine(out) + L-glutamine(in) + Na(+)(in). The enzyme catalyses D-serine(in) + L-alanine(out) + Na(+)(out) = D-serine(out) + L-alanine(in) + Na(+)(in). It catalyses the reaction nitrate(in) = nitrate(out). The catalysed reaction is iodide(out) = iodide(in). It carries out the reaction thiocyanate(in) = thiocyanate(out). With respect to regulation, down-regulated at acidic pH. Functionally, sodium-coupled antiporter of neutral amino acids. In a tri-substrate transport cycle, exchanges neutral amino acids between the extracellular and intracellular compartments, coupled to the inward cotransport of at least one sodium ion. The preferred substrate is the essential amino acid L-glutamine, a precursor for biosynthesis of proteins, nucleotides and amine sugars as well as an alternative fuel for mitochondrial oxidative phosphorylation. Exchanges L-glutamine with other neutral amino acids such as L-serine, L-threonine and L-asparagine in a bidirectional way. Provides L-glutamine to proliferating stem and activated cells driving the metabolic switch toward cell differentiation. The transport cycle is usually pH-independent, with the exception of L-glutamate. Transports extracellular L-glutamate coupled to the cotransport of one proton and one sodium ion in exchange for intracellular L-glutamine counter-ion. May provide for L-glutamate uptake in glial cells regulating glutamine/glutamate cycle in the nervous system. Can transport D-amino acids. Mediates D-serine release from the retinal glia potentially affecting NMDA receptor function in retinal neurons. Displays sodium- and amino acid-dependent but uncoupled channel-like anion conductance with a preference SCN(-) &gt;&gt; NO3(-) &gt; I(-) &gt; Cl(-). Through binding of the fusogenic protein syncytin-1/ERVW-1 may mediate trophoblasts syncytialization, the spontaneous fusion of their plasma membranes, an essential process in placental development. The sequence is that of Neutral amino acid transporter B(0) (Slc1a5) from Rattus norvegicus (Rat).